Here is a 427-residue protein sequence, read N- to C-terminus: Adenylosuccinate synthetase (427 aa).

GTP-binding positions include 12 to 18 (GDEGKGK) and 40 to 42 (GHT). The Proton acceptor role is filled by Asp13. Mg(2+) contacts are provided by Asp13 and Gly40. IMP contacts are provided by residues 13–16 (DEGK), 38–41 (NAGH), Thr128, Arg142, Gln223, Thr238, and Arg302. His41 (proton donor) is an active-site residue. Residue 298–304 (TTTGRPR) participates in substrate binding. Residues Arg304, 330 to 332 (SID), and 412 to 414 (SVG) contribute to the GTP site.

Belongs to the adenylosuccinate synthetase family. As to quaternary structure, homodimer. It depends on Mg(2+) as a cofactor.

It localises to the cytoplasm. It catalyses the reaction IMP + L-aspartate + GTP = N(6)-(1,2-dicarboxyethyl)-AMP + GDP + phosphate + 2 H(+). The protein operates within purine metabolism; AMP biosynthesis via de novo pathway; AMP from IMP: step 1/2. Functionally, plays an important role in the de novo pathway of purine nucleotide biosynthesis. Catalyzes the first committed step in the biosynthesis of AMP from IMP. This Staphylococcus saprophyticus subsp. saprophyticus (strain ATCC 15305 / DSM 20229 / NCIMB 8711 / NCTC 7292 / S-41) protein is Adenylosuccinate synthetase.